Here is a 361-residue protein sequence, read N- to C-terminus: Peptide chain release factor 1 (361 aa).

Residue glutamine 237 is modified to N5-methylglutamine. Residues 286–306 (AKQDQEQAAKRKSLVGSGDRS) form a disordered region.

This sequence belongs to the prokaryotic/mitochondrial release factor family. Post-translationally, methylated by PrmC. Methylation increases the termination efficiency of RF1.

It localises to the cytoplasm. Its function is as follows. Peptide chain release factor 1 directs the termination of translation in response to the peptide chain termination codons UAG and UAA. This Coxiella burnetii (strain CbuK_Q154) (Coxiella burnetii (strain Q154)) protein is Peptide chain release factor 1.